A 243-amino-acid polypeptide reads, in one-letter code: Juxtaposed with another zinc finger protein 1 (243 aa).

A C2H2-type 1 zinc finger spans residues 12–37 (NTCRFGGCGLHFPTLADLIEHIEDNH). The required for interaction with NR2C2 stretch occupies residues 39 to 79 (DTDPRVLEKQELQQPTYVALSYINRFMTDAARREQESLKKK). A compositionally biased stretch (polar residues) spans 89-108 (SSSVSRGNVSTPPRHSSGSL). The tract at residues 89–151 (SSSVSRGNVS…SDSDESWTTE (63 aa)) is disordered. Phosphothreonine is present on residues Thr109 and Thr113. Residues 118 to 130 (PSSSFRSSTPTGS) are compositionally biased toward low complexity. Acidic residues predominate over residues 131 to 148 (EYDEEEVDYEESDSDESW). A C2H2-type 2 zinc finger spans residues 173-198 (FACPVPGCKKRYKNVNGIKYHAKNGH). The C2H2-type 3; degenerate zinc finger occupies 208–230 (FKCRCGKSYKTAQGLRHHTINFH).

In terms of assembly, interacts with NR2C2 (via ligand-binding region). As to expression, highest expression in testis with moderate levels in colon, placenta, prostate and ovary and low levels in brain, spleen, liver and small intestine.

It is found in the nucleus. Functionally, acts as a transcriptional corepressor of orphan nuclear receptor NR2C2. Inhibits expression of the gluconeogenesis enzyme PCK2 through inhibition of NR2C2 activity. Also involved in transcriptional activation of NAMPT by promoting expression of PPARA and PPARD. Plays a role in lipid metabolism by suppressing lipogenesis, increasing lipolysis and decreasing lipid accumulation in adipose tissue. Plays a role in glucose homeostasis by improving glucose metabolism and insulin sensitivity. In Homo sapiens (Human), this protein is Juxtaposed with another zinc finger protein 1.